A 209-amino-acid chain; its full sequence is NAD(P)H-quinone oxidoreductase subunit N, chloroplastic (209 aa).

A chloroplast-targeting transit peptide spans 1 to 45 (MGSRAICIQRVAPPCFEASQVKKIKTVGSFLVNTRSKRRRSTGVK).

It belongs to the NDH complex subunit N family. Part of the chloroplast NDH complex, composed of a mixture of chloroplast and nucleus encoded subunits. Component of the NDH subcomplex A, at least composed of ndhH, ndhI, ndhJ, ndhK, ndhL, ndhM, ndhN and ndhO.

It localises to the plastid. The protein localises to the chloroplast thylakoid membrane. The enzyme catalyses a plastoquinone + NADH + (n+1) H(+)(in) = a plastoquinol + NAD(+) + n H(+)(out). It carries out the reaction a plastoquinone + NADPH + (n+1) H(+)(in) = a plastoquinol + NADP(+) + n H(+)(out). NDH shuttles electrons from NAD(P)H:plastoquinone, via FMN and iron-sulfur (Fe-S) centers, to quinones in the photosynthetic chain and possibly in a chloroplast respiratory chain. The immediate electron acceptor for the enzyme in this species is believed to be plastoquinone. Couples the redox reaction to proton translocation, and thus conserves the redox energy in a proton gradient. The protein is NAD(P)H-quinone oxidoreductase subunit N, chloroplastic of Arabidopsis thaliana (Mouse-ear cress).